The following is a 291-amino-acid chain: Farnesyl diphosphate synthase (291 aa).

3 residues coordinate isopentenyl diphosphate: K44, R47, and H76. The Mg(2+) site is built by D83 and D89. R94 serves as a coordination point for (2E)-geranyl diphosphate. R95 is a binding site for isopentenyl diphosphate. Residues K177, T178, Q215, and K232 each contribute to the (2E)-geranyl diphosphate site.

The protein belongs to the FPP/GGPP synthase family. Mg(2+) serves as cofactor.

The protein resides in the cytoplasm. It carries out the reaction isopentenyl diphosphate + (2E)-geranyl diphosphate = (2E,6E)-farnesyl diphosphate + diphosphate. The chain is Farnesyl diphosphate synthase (fps) from Micrococcus luteus (Micrococcus lysodeikticus).